Here is a 339-residue protein sequence, read N- to C-terminus: Zinc transporter 3 (339 aa).

Residues M1–A25 form the signal peptide. At A26–K54 the chain is on the extracellular side. The helical transmembrane segment at I55 to G75 threads the bilayer. Residues K76 to C86 lie on the Cytoplasmic side of the membrane. Residues F87–V107 traverse the membrane as a helical segment. Topologically, residues L108–E123 are extracellular. The helical transmembrane segment at A124–V144 threads the bilayer. The Cytoplasmic portion of the chain corresponds to D145–R184. The chain crosses the membrane as a helical span at residues V185–L205. The Extracellular portion of the chain corresponds to G206–A216. A helical membrane pass occupies residues L217 to A237. The Cytoplasmic portion of the chain corresponds to Q238–T247. Residues I248–A268 form a helical membrane-spanning segment. Residues N269–A278 are Extracellular-facing. The helical transmembrane segment at L279 to V299 threads the bilayer. The Cytoplasmic portion of the chain corresponds to D300–T315. A helical membrane pass occupies residues G316–A336. Residues K337–A339 lie on the Extracellular side of the membrane.

Belongs to the ZIP transporter (TC 2.A.5) family. As to expression, expressed predominantly in the roots of zinc-deficient plants.

It localises to the cell membrane. Its function is as follows. Mediates zinc uptake from the rhizosphere. May also transport other divalent cations. This Arabidopsis thaliana (Mouse-ear cress) protein is Zinc transporter 3 (ZIP3).